The following is a 678-amino-acid chain: Pescadillo homolog (678 aa).

The segment at 265–289 (PQQQTKTNNTTKKSKSTTAAAAATT) is disordered. Residues 269–289 (TKTNNTTKKSKSTTAAAAATT) are compositionally biased toward low complexity. The BRCT domain maps to 352–442 (DVTTLFKGFH…LLLPYSEYTI (91 aa)). 2 disordered regions span residues 485–601 (TNAE…EDTK) and 626–678 (ATAN…KQKK). Positions 505–518 (SDGESDDEDDEDLE) are enriched in acidic residues. Positions 519-531 (HLETRYTEELRKE) are enriched in basic and acidic residues. Over residues 541–574 (VDDDDEEEEDGEEDGEEEEEEEDGEEESESESES) the composition is skewed to acidic residues. Positions 581-640 (VLTKKQRDELNKQKQAEEDTKLAELMIRKKDKWIYNKVKETNQQRATANQTLLEKRNKVE) form a coiled coil. Basic and acidic residues-rich tracts occupy residues 585–601 (KQRD…EDTK) and 633–643 (LEKRNKVESGK). Over residues 649-678 (VKVAPQPKKPAPLVKKSQQKQQQASKKQKK) the composition is skewed to low complexity.

This sequence belongs to the pescadillo family.

The protein resides in the nucleus. The protein localises to the nucleolus. It is found in the nucleoplasm. Required for maturation of ribosomal RNAs and formation of the large ribosomal subunit. This Dictyostelium discoideum (Social amoeba) protein is Pescadillo homolog.